Consider the following 448-residue polypeptide: MGENVVVSNMERETGKPVAVVAVVTEPRFTQRYREYLERQKLFDTQHRVEKMPDGWVALPVLGETLPEQHLQELRNRVAPGSACMLTRLPDPVPSKRAQGCSPAQKLCLEVSRWVEGRGVKWSAELEADLPRSWQRHGNLLLLSEDCFQANQWKNLGPELWETVASALGVQRLAKRGRVSPDGTRTPAVTLLLGDHGWVEHVDNGILYKFDVTQCMFSFGNITEKLRVASLSCAGEVLVDLYAGIGYFTLPFLVHAGAAFVHACEWNPHAVVALRNNLEINGVADRCQIHFGDNRKLKLSNIADRVILGLIPSSEEGWPIACQVLRQDAGGILHIHQNVESFPGKNLQPLEVSKTEKEHWLYPQQITTNQWKNGATRDTRGKMLSPATKPEWQRWAESAETRIATLLQQVHGKPWKTQILHIQPVKSYAPHVDHIVLDLECCPCPSVG.

S-adenosyl-L-methionine contacts are provided by residues Ser-218, Lys-225, Glu-265, and 293–294; that span reads DN.

The protein belongs to the class I-like SAM-binding methyltransferase superfamily. TRM5/TYW2 family.

The catalysed reaction is 4-demethylwyosine(37) in tRNA(Phe) + S-adenosyl-L-methionine = 4-demethyl-7-[(3S)-3-amino-3-carboxypropyl]wyosine(37) in tRNA(Phe) + S-methyl-5'-thioadenosine + H(+). Its pathway is tRNA modification; wybutosine-tRNA(Phe) biosynthesis. Functionally, S-adenosyl-L-methionine-dependent transferase that acts as a component of the wybutosine biosynthesis pathway. Wybutosine is a hyper modified guanosine with a tricyclic base found at the 3'-position adjacent to the anticodon of eukaryotic phenylalanine tRNA. Catalyzes the transfer of the alpha-amino-alpha-carboxypropyl (acp) group from S-adenosyl-L-methionine to the C-7 position of 4-demethylwyosine (imG-14) to produce wybutosine-86. The chain is tRNA wybutosine-synthesizing protein 2 homolog (TRMT12) from Macaca fascicularis (Crab-eating macaque).